The chain runs to 231 residues: Proteasome subunit alpha type-2 (231 aa).

Belongs to the peptidase T1A family. The 26S proteasome consists of a 20S proteasome core and two 19S regulatory subunits. The 20S proteasome core is composed of 28 subunits that are arranged in four stacked rings, resulting in a barrel-shaped structure. The two end rings are each formed by seven alpha subunits, and the two central rings are each formed by seven beta subunits. The catalytic chamber with the active sites is on the inside of the barrel.

The protein localises to the cytoplasm. Its subcellular location is the nucleus. In terms of biological role, the proteasome is a multicatalytic proteinase complex which is characterized by its ability to cleave peptides with Arg, Phe, Tyr, Leu, and Glu adjacent to the leaving group at neutral or slightly basic pH. The proteasome has an ATP-dependent proteolytic activity. The polypeptide is Proteasome subunit alpha type-2 (pas-2) (Caenorhabditis elegans).